Consider the following 186-residue polypeptide: Protein C (186 aa).

Over residues 1-15 (MSKTDWNASGLSRPS) the composition is skewed to polar residues. A disordered region spans residues 1–45 (MSKTDWNASGLSRPSPSAHWPSRKPWQHGQKYQTTQDRTEPPARK).

It belongs to the morbillivirus protein C family. Interacts with the phosphoprotein (via C-terminus); this interaction allows C to associate with the ribonucleocapsid.

Its subcellular location is the host nucleus. The protein resides in the host cytoplasmic vesicle. Ribonucleocapsid-associated protein that interacts with the phosphoprotein (P), thereby increasing replication accuracy and processivity of the polymerase complex. This Homo sapiens (Human) protein is Protein C (P/V/C).